The primary structure comprises 321 residues: Probable protein phosphatase 2C 44 (321 aa).

Disordered regions lie at residues 1 to 36 (MVGR…GGKK) and 51 to 70 (NSSS…NKVT). Over residues 9–31 (SASSSASCSPSSSAAGTSSSSSA) the composition is skewed to low complexity. The segment covering 51–69 (NSSSTDTGKGRSKQSSNKV) has biased composition (polar residues). The 250-residue stretch at 70–319 (THGFHLVEGK…DDISCIVIRF (250 aa)) folds into the PPM-type phosphatase domain. Positions 107, 108, 271, and 310 each coordinate Mn(2+).

It belongs to the PP2C family. Requires Mg(2+) as cofactor. Mn(2+) serves as cofactor.

The enzyme catalyses O-phospho-L-seryl-[protein] + H2O = L-seryl-[protein] + phosphate. It catalyses the reaction O-phospho-L-threonyl-[protein] + H2O = L-threonyl-[protein] + phosphate. This chain is Probable protein phosphatase 2C 44, found in Oryza sativa subsp. japonica (Rice).